Here is a 595-residue protein sequence, read N- to C-terminus: Beta-lactamase-like protein ARB_00930 (595 aa).

An N-terminal signal peptide occupies residues 1–18; sequence MVVCFLWLLLPYAATTLS. N-linked (GlcNAc...) asparagine glycosylation is found at asparagine 70 and asparagine 102. Serine 117 (acyl-ester intermediate) is an active-site residue. N-linked (GlcNAc...) asparagine glycosylation is found at asparagine 147, asparagine 156, and asparagine 195. Tyrosine 235 serves as the catalytic Proton acceptor. 3 N-linked (GlcNAc...) asparagine glycosylation sites follow: asparagine 249, asparagine 461, and asparagine 473.

The protein belongs to the beta-lactamase family.

Its subcellular location is the secreted. The enzyme catalyses a beta-lactam + H2O = a substituted beta-amino acid. In Arthroderma benhamiae (strain ATCC MYA-4681 / CBS 112371) (Trichophyton mentagrophytes), this protein is Beta-lactamase-like protein ARB_00930.